The primary structure comprises 205 residues: Riboflavin kinase (205 aa).

A disordered region spans residues 1–24; the sequence is MRPDTSRDPVAGPDSGPEPPFPIR. 2 residues coordinate Mg(2+): threonine 44 and asparagine 46. Glutamate 104 (nucleophile) is an active-site residue.

It belongs to the flavokinase family. The cofactor is Zn(2+). Mg(2+) is required as a cofactor.

It carries out the reaction riboflavin + ATP = FMN + ADP + H(+). It functions in the pathway cofactor biosynthesis; FMN biosynthesis; FMN from riboflavin (ATP route): step 1/1. Functionally, catalyzes the phosphorylation of riboflavin (vitamin B2) to form flavin mononucleotide (FMN) coenzyme. The chain is Riboflavin kinase (fmn1) from Aspergillus terreus (strain NIH 2624 / FGSC A1156).